Here is a 104-residue protein sequence, read N- to C-terminus: Photosystem II reaction center Psb28 protein (104 aa).

It belongs to the Psb28 family. Part of the photosystem II complex.

The protein resides in the cellular thylakoid membrane. The chain is Photosystem II reaction center Psb28 protein from Synechococcus sp. (strain JA-2-3B'a(2-13)) (Cyanobacteria bacterium Yellowstone B-Prime).